The sequence spans 171 residues: UPF0398 protein MGAS9429_Spy1349 (171 aa).

It belongs to the UPF0398 family.

The chain is UPF0398 protein MGAS9429_Spy1349 from Streptococcus pyogenes serotype M12 (strain MGAS9429).